Consider the following 458-residue polypeptide: UPF0210 protein MmarC6_1246 (458 aa).

The protein belongs to the UPF0210 family.

In Methanococcus maripaludis (strain C6 / ATCC BAA-1332), this protein is UPF0210 protein MmarC6_1246.